The following is a 634-amino-acid chain: Chaperone protein dnaK2 (634 aa).

Threonine 197 is modified (phosphothreonine; by autocatalysis). Positions 592-634 (IGSSVYQQPGNQPPAPGTPDSNESNDKGGDDDVIDADFTETKD) are disordered. Acidic residues predominate over residues 622–634 (DDVIDADFTETKD).

Belongs to the heat shock protein 70 family.

In terms of biological role, acts as a chaperone. The protein is Chaperone protein dnaK2 (dnaK2) of Prochlorococcus marinus subsp. pastoris (strain CCMP1986 / NIES-2087 / MED4).